The following is a 130-amino-acid chain: Sec-independent protein translocase protein TatB (130 aa).

Residues methionine 1–glycine 21 traverse the membrane as a helical segment. Positions valine 70–serine 130 are disordered. 2 stretches are compositionally biased toward basic and acidic residues: residues glutamate 80 to aspartate 89 and proline 96 to proline 111.

The protein belongs to the TatB family. As to quaternary structure, the Tat system comprises two distinct complexes: a TatABC complex, containing multiple copies of TatA, TatB and TatC subunits, and a separate TatA complex, containing only TatA subunits. Substrates initially bind to the TatABC complex, which probably triggers association of the separate TatA complex to form the active translocon.

It localises to the cell inner membrane. Functionally, part of the twin-arginine translocation (Tat) system that transports large folded proteins containing a characteristic twin-arginine motif in their signal peptide across membranes. Together with TatC, TatB is part of a receptor directly interacting with Tat signal peptides. TatB may form an oligomeric binding site that transiently accommodates folded Tat precursor proteins before their translocation. This Nitrosomonas eutropha (strain DSM 101675 / C91 / Nm57) protein is Sec-independent protein translocase protein TatB.